A 192-amino-acid chain; its full sequence is Cytochrome c4 (192 aa).

Cytochrome c domains lie at Gly-12–Pro-90 and Glu-99–Ser-191. Heme c contacts are provided by Cys-25, Cys-28, His-29, Cys-120, Cys-123, and His-124.

Post-translationally, binds 2 heme c groups covalently per subunit.

It is found in the periplasm. Functionally, diheme, high potential cytochrome c believed to be an intermediate electron donor in an anaerobic electron transport chain. This Thiocapsa roseopersicina protein is Cytochrome c4.